A 212-amino-acid chain; its full sequence is Pyridoxine/pyridoxamine 5'-phosphate oxidase (212 aa).

Residues 8 to 11 and K66 each bind substrate; that span reads RRTY. Residues 61 to 66, 76 to 77, R82, K83, and Q105 contribute to the FMN site; these read RIVLLK and FT. Residues Y123, R127, and S131 each coordinate substrate. Residues 140 to 141 and W184 contribute to the FMN site; that span reads QS. 190-192 is a substrate binding site; that stretch reads RLH. R194 contacts FMN.

The protein belongs to the pyridoxamine 5'-phosphate oxidase family. In terms of assembly, homodimer. FMN is required as a cofactor.

It carries out the reaction pyridoxamine 5'-phosphate + O2 + H2O = pyridoxal 5'-phosphate + H2O2 + NH4(+). The catalysed reaction is pyridoxine 5'-phosphate + O2 = pyridoxal 5'-phosphate + H2O2. Its pathway is cofactor metabolism; pyridoxal 5'-phosphate salvage; pyridoxal 5'-phosphate from pyridoxamine 5'-phosphate: step 1/1. The protein operates within cofactor metabolism; pyridoxal 5'-phosphate salvage; pyridoxal 5'-phosphate from pyridoxine 5'-phosphate: step 1/1. In terms of biological role, catalyzes the oxidation of either pyridoxine 5'-phosphate (PNP) or pyridoxamine 5'-phosphate (PMP) into pyridoxal 5'-phosphate (PLP). This is Pyridoxine/pyridoxamine 5'-phosphate oxidase from Cupriavidus pinatubonensis (strain JMP 134 / LMG 1197) (Cupriavidus necator (strain JMP 134)).